Here is a 268-residue protein sequence, read N- to C-terminus: MDTSSYIFWDMSPDMFSLGPITIRWYGVFFALSFLCGLYLMTKVFEHEKKPEDDINYLFYYMIAGTVIGARLGHCFFYEPDYYLAHPAEIIKVWHGGLASHGGVLGILTAVYFYSRSRPEQSLAWVLDRITLPAMLGAGLIRLGNLFNSEIIGIPTDVSWAFIFARVDLLPRHPVQLYESIVYFLIFGFLMLAYWKWDWGKQRGLLLGTILTSVFSARFLLEFFKTRQADYGHDLPLSVGQWLSIPAVIIGVLLIFQSVKQAQLEKTS.

A run of 3 helical transmembrane segments spans residues 25–45 (WYGV…TKVF), 57–77 (YLFY…HCFF), and 93–113 (VWHG…AVYF). Residue arginine 142 participates in a 1,2-diacyl-sn-glycero-3-phospho-(1'-sn-glycerol) binding. Helical transmembrane passes span 151–171 (IIGI…DLLP), 175–195 (VQLY…LAYW), 204–224 (GLLL…LEFF), and 236–256 (PLSV…LLIF).

Belongs to the Lgt family.

It localises to the cell inner membrane. It carries out the reaction L-cysteinyl-[prolipoprotein] + a 1,2-diacyl-sn-glycero-3-phospho-(1'-sn-glycerol) = an S-1,2-diacyl-sn-glyceryl-L-cysteinyl-[prolipoprotein] + sn-glycerol 1-phosphate + H(+). Its pathway is protein modification; lipoprotein biosynthesis (diacylglyceryl transfer). Its function is as follows. Catalyzes the transfer of the diacylglyceryl group from phosphatidylglycerol to the sulfhydryl group of the N-terminal cysteine of a prolipoprotein, the first step in the formation of mature lipoproteins. The sequence is that of Phosphatidylglycerol--prolipoprotein diacylglyceryl transferase from Chloroherpeton thalassium (strain ATCC 35110 / GB-78).